The sequence spans 64 residues: Large ribosomal subunit protein bL35 (64 aa).

Residues 1 to 54 (MPKIKSNSGAAKRFKKTAHGFKHKQSFRSHILTKKSTKRKRQLRGMKQIHDADK) are disordered. Residues 12–44 (KRFKKTAHGFKHKQSFRSHILTKKSTKRKRQLR) show a composition bias toward basic residues.

The protein belongs to the bacterial ribosomal protein bL35 family.

This chain is Large ribosomal subunit protein bL35, found in Chromohalobacter salexigens (strain ATCC BAA-138 / DSM 3043 / CIP 106854 / NCIMB 13768 / 1H11).